We begin with the raw amino-acid sequence, 113 residues long: Ribulose bisphosphate carboxylase small subunit (113 aa).

It belongs to the RuBisCO small chain family. Heterohexadecamer of 8 large and 8 small subunits. Forms a CsoS2-CsoS1-RuBisCO complex.

It is found in the carboxysome. RuBisCO catalyzes two reactions: the carboxylation of D-ribulose 1,5-bisphosphate, the primary event in carbon dioxide fixation, as well as the oxidative fragmentation of the pentose substrate in the photorespiration process. Both reactions occur simultaneously and in competition at the same active site. Although the small subunit is not catalytic it is essential for maximal activity. There are estimated to be 152 RuBisCO holoenzymes per carboxysome. This is Ribulose bisphosphate carboxylase small subunit from Prochlorococcus marinus subsp. pastoris (strain CCMP1986 / NIES-2087 / MED4).